The primary structure comprises 361 residues: Mannose-1-phosphate guanyltransferase (361 aa).

The residue at position 153 (T153) is a Phosphothreonine. K244 is covalently cross-linked (Glycyl lysine isopeptide (Lys-Gly) (interchain with G-Cter in ubiquitin)).

Belongs to the transferase hexapeptide repeat family.

It localises to the cytoplasm. The enzyme catalyses alpha-D-mannose 1-phosphate + GTP + H(+) = GDP-alpha-D-mannose + diphosphate. It functions in the pathway nucleotide-sugar biosynthesis; GDP-alpha-D-mannose biosynthesis; GDP-alpha-D-mannose from alpha-D-mannose 1-phosphate (GTP route): step 1/1. Functionally, involved in cell wall synthesis where it is required for glycosylation. Involved in cell cycle progression through cell-size checkpoint. This chain is Mannose-1-phosphate guanyltransferase (PSA1), found in Saccharomyces cerevisiae (strain ATCC 204508 / S288c) (Baker's yeast).